Consider the following 591-residue polypeptide: Max-binding protein MNT (591 aa).

Ser2 bears the N-acetylserine mark. 2 disordered regions span residues 17–122 (AQQQ…APRQ) and 182–223 (PGVQ…GIGT). The segment covering 22–44 (RAREEQERLRLEREREREQEQKR) has biased composition (basic and acidic residues). Pro residues-rich tracts occupy residues 63–84 (EAPP…PLAT) and 102–120 (SLPP…PLAP). Residues 205–216 (PAEEAKSSEQKK) show a composition bias toward basic and acidic residues. The region spanning 222–273 (GTREVHNKLEKNRRAHLKECFETLKRNIPNVDDKKTSNLSVLRTALRYIQSL) is the bHLH domain. The leucine-zipper stretch occupies residues 273 to 301 (LKRKEKEYEHEMERLAREKIATQQRLAEL). A disordered region spans residues 321 to 426 (TGQPEDDQAS…PPPATPTQTL (106 aa)). Residues 336-346 (EGEDNVDEEME) are compositionally biased toward acidic residues. Positions 374–383 (STAPAPLPTH) are enriched in pro residues. Low complexity predominate over residues 390-411 (PVALSPAHLPVQQQQPPQQKTP). The span at 412 to 421 (LPAPPPPPAT) shows a compositional bias: pro residues.

As to quaternary structure, efficient DNA binding requires dimerization with another bHLH protein. Binds DNA as a homodimer or a heterodimer with MAX.

It localises to the nucleus. In terms of biological role, binds DNA as a heterodimer with MAX and represses transcription. Binds to the canonical E box sequence 5'-CACGTG-3' and, with higher affinity, to 5'-CACGCG-3'. The chain is Max-binding protein MNT (Mnt) from Mus musculus (Mouse).